Reading from the N-terminus, the 975-residue chain is Translation initiation factor IF-2 (975 aa).

Positions 48 to 63 (DHLRKSHGATDGDKRK) are enriched in basic and acidic residues. 2 disordered regions span residues 48–84 (DHLR…GKAR) and 96–388 (FVKR…QAPT). Positions 104–115 (ETGADQAQAQTD) are enriched in low complexity. Residues 120–177 (AELKRREEEARREAELLEKQAQELRERQERLEREEAERRAREEAAEAERRRAEEEAAA) are compositionally biased toward basic and acidic residues. The span at 178 to 211 (KRAAAAQAEAAQQAAAAREQAQRAQSEPAEQSAQ) shows a compositional bias: low complexity. Positions 212–263 (DEARAAAERAAQREAAKKAEDAAREAADKARAEQEEIRKRREAAEAEARAIR) are enriched in basic and acidic residues. Low complexity predominate over residues 302-330 (KPAGEAAAARPAAKKPASGAPAPAAAPAG). The span at 359–372 (SSGGVDRGWRGGPK) shows a compositional bias: gly residues. The tr-type G domain maps to 475 to 644 (PRPPVVTVMG…LLQAEVLELK (170 aa)). The segment at 484–491 (GHVDHGKT) is G1. 484 to 491 (GHVDHGKT) contacts GTP. A G2 region spans residues 509-513 (GITQH). The G3 stretch occupies residues 530–533 (DTPG). GTP is bound by residues 530–534 (DTPGH) and 584–587 (NKID). Residues 584-587 (NKID) are G4. The tract at residues 620 to 622 (SAK) is G5.

Belongs to the TRAFAC class translation factor GTPase superfamily. Classic translation factor GTPase family. IF-2 subfamily.

It is found in the cytoplasm. In terms of biological role, one of the essential components for the initiation of protein synthesis. Protects formylmethionyl-tRNA from spontaneous hydrolysis and promotes its binding to the 30S ribosomal subunits. Also involved in the hydrolysis of GTP during the formation of the 70S ribosomal complex. The protein is Translation initiation factor IF-2 of Burkholderia pseudomallei (strain 1710b).